Consider the following 212-residue polypeptide: MSDLSDIRREYTQGGLRRANLPVNPMDLFEQWMQQAKDAQLSDPTAMCVATVDEDGQPFQRIVLLKKFDDNGFVFFTNLESRKAKQIATNSKISLLFPWHPLERQVAVLGEAEPLSMLDVAKYFMSRPKDSQIAAWVSKQSSKISARQALEGKFAEMKAKFAQGEVPLPKFWGGYLVRPASIEFWQGGEHRLHDRFIYTKTDADWNIDRLAP.

Residues 8 to 11 and K66 contribute to the substrate site; that span reads RREY. Residues 61 to 66, 76 to 77, R82, K83, and Q105 each bind FMN; these read RIVLLK and FT. 3 residues coordinate substrate: Y123, R127, and S131. FMN-binding positions include 140-141 and W185; that span reads QS. 191–193 lines the substrate pocket; sequence RLH. R195 provides a ligand contact to FMN.

This sequence belongs to the pyridoxamine 5'-phosphate oxidase family. Homodimer. It depends on FMN as a cofactor.

It catalyses the reaction pyridoxamine 5'-phosphate + O2 + H2O = pyridoxal 5'-phosphate + H2O2 + NH4(+). The catalysed reaction is pyridoxine 5'-phosphate + O2 = pyridoxal 5'-phosphate + H2O2. Its pathway is cofactor metabolism; pyridoxal 5'-phosphate salvage; pyridoxal 5'-phosphate from pyridoxamine 5'-phosphate: step 1/1. It participates in cofactor metabolism; pyridoxal 5'-phosphate salvage; pyridoxal 5'-phosphate from pyridoxine 5'-phosphate: step 1/1. Functionally, catalyzes the oxidation of either pyridoxine 5'-phosphate (PNP) or pyridoxamine 5'-phosphate (PMP) into pyridoxal 5'-phosphate (PLP). In Shewanella frigidimarina (strain NCIMB 400), this protein is Pyridoxine/pyridoxamine 5'-phosphate oxidase.